A 297-amino-acid chain; its full sequence is MARSDEDTWDLASSVGATATMVAAARAVASRGPDTLIDDPYADALVRAVGVEYFVKLLDGEITLEADNAAMLAVMTDVMAVRTRFFDDFFLSSGLPQAVILASGLDARTYRLPWPSGSVVYEIDQPEVIEFKTRTLADLGASPAAELRTVAIDLRDDWPRALRDRGFDPTAPTAWIAEGLLIYLPPDAQDRLFDNITALSAPGSRLATEFHPDAGARIGASSQRMAEEWRRHGLDLDMADLFYDGERNPVVDYLRERGWEVEARSRPDMFAHYGRPFPTGEAVEALRQSLAVTATRR.

S-adenosyl-L-methionine is bound by residues aspartate 124 and 153–154 (DL).

Belongs to the UPF0677 family.

Exhibits S-adenosyl-L-methionine-dependent methyltransferase activity. This Mycobacterium sp. (strain MCS) protein is Putative S-adenosyl-L-methionine-dependent methyltransferase Mmcs_1044.